A 601-amino-acid chain; its full sequence is Lanthanide-dependent methanol dehydrogenase (601 aa).

Positions 1–21 (MRAVHLLALGAGLAAASPALA) are cleaved as a signal peptide. Cys124 and Cys125 are disulfide-bonded. Positions 130, 174, 189, 190, and 191 each coordinate pyrroloquinoline quinone. Residue Glu192 coordinates La(3+). Cys197 and Cys256 form a disulfide bridge. Pyrroloquinoline quinone is bound at residue Trp258. La(3+) contacts are provided by Asn276, Asp318, and Asp320. The active-site Proton acceptor is the Asp318. Residue Arg345 participates in pyrroloquinoline quinone binding. Cys408 and Cys437 are oxidised to a cystine. Residues Trp494 and Trp558 each coordinate pyrroloquinoline quinone.

This sequence belongs to the bacterial PQQ dehydrogenase family. In terms of assembly, homodimer. It depends on La(3+) as a cofactor. The cofactor is Nd(3+). Requires pyrroloquinoline quinone as cofactor.

It is found in the periplasm. The catalysed reaction is 2 Fe(III)-[cytochrome cL] + methanol = 2 Fe(II)-[cytochrome cL] + formaldehyde + 2 H(+). Functionally, catalyzes the oxidation of methanol to formaldehyde, but only in the presence of lanthanides (Ln). Contributes to methanol metabolism when La(3+) is present in the natural environment of the bacterium, allowing bacterial growth with methanol as carbon and energy source. Thereby is an essential enzyme for Ln-dependent methylotrophy. Uses a specific cytochrome cL (XoxG), encoded by the adjacent gene in the locus, as electron acceptor. Also plays a role in the transcriptional regulation of the mxa and xox1 operons, most likely acting as a lanthanide sensory module. Is also able to oxidize formaldehyde to formate in vitro, but this activity does not occur in vivo. The sequence is that of Lanthanide-dependent methanol dehydrogenase from Methylorubrum extorquens (strain ATCC 14718 / DSM 1338 / JCM 2805 / NCIMB 9133 / AM1) (Methylobacterium extorquens).